The primary structure comprises 124 residues: Fluoride-specific ion channel FluC (124 aa).

A run of 4 helical transmembrane segments spans residues 5–25 (FLQV…VNIL), 35–55 (LGTL…AALL), 63–83 (LAPF…AFAL), and 98–118 (LGYV…GLTV). G73 and T76 together coordinate Na(+).

It belongs to the fluoride channel Fluc/FEX (TC 1.A.43) family.

It is found in the cell inner membrane. It carries out the reaction fluoride(in) = fluoride(out). Na(+) is not transported, but it plays an essential structural role and its presence is essential for fluoride channel function. Its function is as follows. Fluoride-specific ion channel. Important for reducing fluoride concentration in the cell, thus reducing its toxicity. The polypeptide is Fluoride-specific ion channel FluC (Paracoccus denitrificans (strain Pd 1222)).